The following is a 218-amino-acid chain: Ribose-5-phosphate isomerase A (218 aa).

Substrate contacts are provided by residues 28 to 31 (TGST), 81 to 84 (DGAD), and 94 to 97 (KGGG). Glu103 (proton acceptor) is an active-site residue. Lys121 contributes to the substrate binding site.

It belongs to the ribose 5-phosphate isomerase family. Homodimer.

It carries out the reaction aldehydo-D-ribose 5-phosphate = D-ribulose 5-phosphate. It participates in carbohydrate degradation; pentose phosphate pathway; D-ribose 5-phosphate from D-ribulose 5-phosphate (non-oxidative stage): step 1/1. Functionally, catalyzes the reversible conversion of ribose-5-phosphate to ribulose 5-phosphate. This chain is Ribose-5-phosphate isomerase A, found in Vibrio campbellii (strain ATCC BAA-1116).